A 207-amino-acid polypeptide reads, in one-letter code: Large ribosomal subunit protein eL13 (207 aa).

The protein belongs to the eukaryotic ribosomal protein eL13 family. Component of the 60S large ribosomal subunit (LSU).

It localises to the cytoplasm. Functionally, component of the ribosome, a large ribonucleoprotein complex responsible for the synthesis of proteins in the cell. The small ribosomal subunit (SSU) binds messenger RNAs (mRNAs) and translates the encoded message by selecting cognate aminoacyl-transfer RNA (tRNA) molecules. The large subunit (LSU) contains the ribosomal catalytic site termed the peptidyl transferase center (PTC), which catalyzes the formation of peptide bonds, thereby polymerizing the amino acids delivered by tRNAs into a polypeptide chain. The nascent polypeptides leave the ribosome through a tunnel in the LSU and interact with protein factors that function in enzymatic processing, targeting, and the membrane insertion of nascent chains at the exit of the ribosomal tunnel. As part of the LSU, it is probably required for its formation and the maturation of rRNAs. This Caenorhabditis elegans protein is Large ribosomal subunit protein eL13 (rpl-13).